The sequence spans 519 residues: (3S,6E)-nerolidol synthase 1 (519 aa).

Mg(2+) contacts are provided by D273, D277, D417, S421, and E425. Positions 273-277 match the DDXXD motif motif; the sequence is DDIFD.

Belongs to the terpene synthase family. Tpsg subfamily. Mg(2+) is required as a cofactor. It depends on Mn(2+) as a cofactor. Expressed in receptacle tissue. Not detected in leaves or green fruit.

It is found in the cytoplasm. The protein resides in the cytosol. It carries out the reaction (2E,6E)-farnesyl diphosphate + H2O = (3S,6E)-nerolidol + diphosphate. It participates in secondary metabolite biosynthesis; terpenoid biosynthesis. In terms of biological role, involved in monoterpene (C10) and sesquiterpene (C15) biosynthesis. Converts geranyl diphosphate (GPP) into S-linalool and farnesyl diphosphate (FPP) into (3S)-E-nerolidol. Exclusively present and highly expressed in the fruit of cultivated (octaploid) varieties. In Fragaria ananassa (Strawberry), this protein is (3S,6E)-nerolidol synthase 1.